We begin with the raw amino-acid sequence, 536 residues long: Copine-1 (536 aa).

2 C2 domains span residues 1–113 (MAHC…TLPL) and 122–244 (GRGT…ECIH). The Ca(2+) site is built by D21, D27, D79, D81, D91, D152, and D158. K170 bears the N6-acetyllysine mark. Ca(2+) contacts are provided by D213, D215, and D221. The 203-residue stretch at 282 to 484 (QINFTVGVDF…AARDIVQFVP (203 aa)) folds into the VWFA domain.

Belongs to the copine family. As to quaternary structure, homodimer; homodimerizes via its C2 domains. Interacts with p65/RELA (via N-terminus); this interaction induces proteolytic cleavage of p65/RELA subunit and inhibition of NF-kappa-B transcriptional activity. Interacts (via VWFA domain) with ACTB, CCDC22, MYCBP2, PPP5C, RDX and UBE2O. Ca(2+) serves as cofactor. In terms of tissue distribution, expressed in liver, brain, heart, intestine, kidney and lung (at protein level).

The protein localises to the nucleus. The protein resides in the cytoplasm. It localises to the cell membrane. In terms of biological role, calcium-dependent phospholipid-binding protein that plays a role in calcium-mediated intracellular processes. Involved in the TNF-alpha receptor signaling pathway in a calcium-dependent manner. Exhibits calcium-dependent phospholipid binding properties. Plays a role in neuronal progenitor cell differentiation; induces neurite outgrowth via a AKT-dependent signaling cascade and calcium-independent manner. May recruit target proteins to the cell membrane in a calcium-dependent manner. May function in membrane trafficking. Involved in TNF-alpha-induced NF-kappa-B transcriptional repression by inducing endoprotease processing of the transcription factor NF-kappa-B p65/RELA subunit. Also induces endoprotease processing of NF-kappa-B p50/NFKB1, p52/NFKB2, RELB and REL. In Rattus norvegicus (Rat), this protein is Copine-1.